The chain runs to 458 residues: Ribosomal protein uS12 methylthiotransferase RimO (458 aa).

In terms of domain architecture, MTTase N-terminal spans 6–116; sequence PKVGFVSLGC…VMEAVHAALP (111 aa). 6 residues coordinate [4Fe-4S] cluster: Cys-15, Cys-51, Cys-80, Cys-147, Cys-151, and Cys-154. The region spanning 133-371 is the Radical SAM core domain; that stretch reads LTPRHYAYLK…AKQAQISALR (239 aa). Positions 373–441 constitute a TRAM domain; it reads ESKIGSVQQC…EHDLFGDALP (69 aa).

This sequence belongs to the methylthiotransferase family. RimO subfamily. It depends on [4Fe-4S] cluster as a cofactor.

The protein localises to the cytoplasm. It catalyses the reaction L-aspartate(89)-[ribosomal protein uS12]-hydrogen + (sulfur carrier)-SH + AH2 + 2 S-adenosyl-L-methionine = 3-methylsulfanyl-L-aspartate(89)-[ribosomal protein uS12]-hydrogen + (sulfur carrier)-H + 5'-deoxyadenosine + L-methionine + A + S-adenosyl-L-homocysteine + 2 H(+). In terms of biological role, catalyzes the methylthiolation of an aspartic acid residue of ribosomal protein uS12. This is Ribosomal protein uS12 methylthiotransferase RimO from Xanthomonas euvesicatoria pv. vesicatoria (strain 85-10) (Xanthomonas campestris pv. vesicatoria).